Consider the following 287-residue polypeptide: Glutamate racemase (287 aa).

The span at 1 to 15 shows a compositional bias: polar residues; that stretch reads MATKPQDANTTSREA. A disordered region spans residues 1–25; that stretch reads MATKPQDANTTSREAITSKADSPPR. Substrate-binding positions include 32-33 and 64-65; these read DS and YG. Residue C96 is the Proton donor/acceptor of the active site. 97–98 is a binding site for substrate; it reads NT. Residue C208 is the Proton donor/acceptor of the active site. 209–210 serves as a coordination point for substrate; the sequence is TH.

It belongs to the aspartate/glutamate racemases family.

The enzyme catalyses L-glutamate = D-glutamate. The protein operates within cell wall biogenesis; peptidoglycan biosynthesis. In terms of biological role, provides the (R)-glutamate required for cell wall biosynthesis. The polypeptide is Glutamate racemase (Yersinia pseudotuberculosis serotype I (strain IP32953)).